Consider the following 309-residue polypeptide: Serine/threonine-protein phosphatase 2A catalytic subunit alpha isoform (309 aa).

Residues Asp57, His59, Asp85, and Asn117 each coordinate Mn(2+). Zn(2+) is bound by residues Asp57, His59, and Asp85. Residues Asp85 and Asn117 each contribute to the Fe(3+) site. Catalysis depends on His118, which acts as the Proton donor. Mn(2+)-binding residues include His167 and His241. 2 residues coordinate Fe(3+): His167 and His241. Phosphotyrosine is present on Tyr307. Leu309 is subject to Leucine methyl ester.

Belongs to the PPP phosphatase family. PP-1 subfamily. As to quaternary structure, PP2A consists of a common heterodimeric core enzyme, composed of PPP2CA, a 36 kDa catalytic subunit (subunit C), and PPP2R1A, a 65 kDa constant regulatory subunit (PR65 or subunit A), that associates with a variety of regulatory subunits. Proteins that associate with the core dimer include three families of regulatory subunits B (the R2/B/PR55/B55, R3/B''/PR72/PR130/PR59 and R5/B'/B56 families), the 48 kDa variable regulatory subunit, viral proteins, and cell signaling molecules. May indirectly interact with SGOL1, most probably through regulatory B56 subunits. Phosphatase component of the Integrator-PP2A (INTAC) complex, composed of the Integrator core complex and protein phosphatase 2A subunits PPP2CA and PPP2R1A. Requires Mn(2+) as cofactor. It depends on Fe(3+) as a cofactor. Zn(2+) is required as a cofactor. Reversibly methyl esterified on Leu-309 by leucine carboxyl methyltransferase 1 (LCMT1) and protein phosphatase methylesterase 1 (PPME1). Carboxyl methylation influences the affinity of the catalytic subunit for the different regulatory subunits, thereby modulating the PP2A holoenzyme's substrate specificity, enzyme activity and cellular localization. In terms of processing, phosphorylation of either threonine (by autophosphorylation-activated protein kinase) or tyrosine results in inactivation of the phosphatase. Auto-dephosphorylation has been suggested as a mechanism for reactivation.

Its subcellular location is the cytoplasm. The protein localises to the nucleus. It is found in the chromosome. It localises to the centromere. The protein resides in the cytoskeleton. Its subcellular location is the spindle pole. The enzyme catalyses O-phospho-L-seryl-[protein] + H2O = L-seryl-[protein] + phosphate. The catalysed reaction is O-phospho-L-threonyl-[protein] + H2O = L-threonyl-[protein] + phosphate. Inhibited by the interaction between PPP2R2A and ARPP19; this inhibition is enhanced when ARPP19 is phosphorylated. Inhibited by the interaction between PPP2R2A and PABIR1/FAM122A. In terms of biological role, PP2A is the major phosphatase for microtubule-associated proteins (MAPs). PP2A can modulate the activity of phosphorylase B kinase casein kinase 2, mitogen-stimulated S6 kinase, and MAP-2 kinase. Key mediator of a quality checkpoint during transcription elongation as part of the Integrator-PP2A (INTAC) complex. The INTAC complex drives premature transcription termination of transcripts that are unfavorably configured for transcriptional elongation: within the INTAC complex, PPP2CA catalyzes dephosphorylation of the C-terminal domain (CTD) of Pol II subunit POLR2A/RPB1 and SUPT5H/SPT5, thereby preventing transcriptional elongation. This is Serine/threonine-protein phosphatase 2A catalytic subunit alpha isoform (PPP2CA) from Gallus gallus (Chicken).